The following is a 429-amino-acid chain: Serine transporter SdaC (429 aa).

The Cytoplasmic segment spans residues 1–22; it reads METTQTSTIASKDSRSAWRKTD. The helical transmembrane segment at 23-43 threads the bilayer; that stretch reads TMWMLGLYGTAIGAGVLFLPI. The Periplasmic portion of the chain corresponds to 44–46; the sequence is NAG. The helical transmembrane segment at 47-67 threads the bilayer; the sequence is VGGMIPLIIMAILAFPMTFFA. Residues 68–99 are Cytoplasmic-facing; it reads HRGLTRFVLSGKNPGEDITEVVEEHFGIGAGK. Residues 100-120 form a helical membrane-spanning segment; it reads LITLLYFFAIYPILLVYSVAI. Topologically, residues 121–140 are periplasmic; sequence TNTVESFMSHQLGMTPPPRA. Residues 141–161 traverse the membrane as a helical segment; that stretch reads ILSLILIVGMMTIVRFGEQMI. At 162-163 the chain is on the cytoplasmic side; it reads VK. A helical membrane pass occupies residues 164–184; that stretch reads AMSILVFPFVGVLMLLALYLI. The Periplasmic portion of the chain corresponds to 185-201; sequence PQWNGAALETLSLDTAS. Residues 202 to 222 traverse the membrane as a helical segment; it reads ATGNGLWMTLWLAIPVMVFSF. Over 223-249 the chain is Cytoplasmic; that stretch reads NHSPIISSFAVAKREEYGDMAEQKCSK. The helical transmembrane segment at 250–270 threads the bilayer; sequence ILAFAHIMMVLTVMFFVFSCV. Residues 271–297 lie on the Periplasmic side of the membrane; that stretch reads LSLTPADLAAAKEQNISILSYLANHFN. A helical membrane pass occupies residues 298-318; the sequence is APVIAWMAPIIAIIAITKSFL. Topologically, residues 319–347 are cytoplasmic; that stretch reads GHYLGAREGFNGMVIKSLRGKGKSIEINK. The chain crosses the membrane as a helical span at residues 348–368; the sequence is LNRITALFMLVTTWIVATLNP. Ser-369 is a topological domain (periplasmic). A helical membrane pass occupies residues 370–390; it reads ILGMIETLGGPIIAMILFLMP. Residues 391–406 lie on the Cytoplasmic side of the membrane; the sequence is MYAIQKVPAMRKYSGH. A helical transmembrane segment spans residues 407–427; sequence ISNVFVVVMGLIAISAIFYSL. Residues 428–429 are Periplasmic-facing; it reads FS.

The protein belongs to the amino acid/polyamine transporter 2 family. SdaC/TdcC subfamily.

The protein resides in the cell inner membrane. The catalysed reaction is L-serine(in) + H(+)(in) = L-serine(out) + H(+)(out). Functionally, mediates the import of L-serine into the cell. Is energized by proton cotransport. The protein is Serine transporter SdaC (sdaC) of Escherichia coli O157:H7.